We begin with the raw amino-acid sequence, 712 residues long: Cyclolysin secretion/processing ATP-binding protein CyaB (712 aa).

Residues glutamine 7 to cysteine 128 enclose the Peptidase C39 domain. One can recognise an ABC transmembrane type-1 domain in the interval isoleucine 157 to glutamine 439. 6 helical membrane-spanning segments follow: residues valine 160 to valine 180, leucine 194 to isoleucine 214, alanine 272 to tyrosine 292, leucine 298 to leucine 318, valine 367 to isoleucine 387, and leucine 390 to valine 410. One can recognise an ABC transporter domain in the interval isoleucine 471–leucine 706. Glycine 505–serine 512 is a binding site for ATP.

It belongs to the ABC transporter superfamily. Cyclolysin exporter (TC 3.A.1.109.2) family.

The protein localises to the cell membrane. Involved in the export of calmodulin-sensitive adenylate cyclase-hemolysin (cyclolysin). The polypeptide is Cyclolysin secretion/processing ATP-binding protein CyaB (cyaB) (Bordetella pertussis (strain ATCC 9797 / DSM 5571 / CCUG 30873 / LMG 14455 / NCTC 10739 / 18323)).